Reading from the N-terminus, the 695-residue chain is NADPH--cytochrome P450 reductase (695 aa).

The Lumenal portion of the chain corresponds to 1–8 (MAQLDTLD). A helical transmembrane segment spans residues 9–31 (LVVLAVLLVGSVAYFTKGTYWAV). Residues 32-695 (AKDPYASTGP…SGSYQEDVWS (664 aa)) are Cytoplasmic-facing. Residues 66–221 (CVIFYGSQTG…DFLAWKEPMW (156 aa)) form the Flavodoxin-like domain. FMN contacts are provided by residues 72-77 (SQTGTA), 123-126 (ATYG), 169-178 (LGNNTYEHYN), and Asp-204. The region spanning 277-538 (HNPFIAPIAE…HVRHSNFKLP (262 aa)) is the FAD-binding FR-type domain. Residue Arg-296 coordinates NADP(+). FAD contacts are provided by residues 451 to 454 (RYYS), 469 to 471 (TAV), and 486 to 489 (GVTT). Residues Thr-552, 614-615 (SR), 620-624 (KVYVQ), and Glu-656 each bind NADP(+). Residue Trp-694 coordinates FAD.

It belongs to the NADPH--cytochrome P450 reductase family. This sequence in the N-terminal section; belongs to the flavodoxin family. The protein in the C-terminal section; belongs to the flavoprotein pyridine nucleotide cytochrome reductase family. FAD serves as cofactor. It depends on FMN as a cofactor.

Its subcellular location is the endoplasmic reticulum membrane. The protein localises to the mitochondrion outer membrane. It localises to the cell membrane. The catalysed reaction is 2 oxidized [cytochrome P450] + NADPH = 2 reduced [cytochrome P450] + NADP(+) + H(+). In terms of biological role, this enzyme is required for electron transfer from NADP to cytochrome P450 in microsomes. It can also provide electron transfer to heme oxygenase and cytochrome B5. Involved in ergosterol biosynthesis. The sequence is that of NADPH--cytochrome P450 reductase from Aspergillus niger (strain ATCC MYA-4892 / CBS 513.88 / FGSC A1513).